The primary structure comprises 340 residues: UDP-N-acetylglucosamine--N-acetylmuramyl-(pentapeptide) pyrophosphoryl-undecaprenol N-acetylglucosamine transferase (340 aa).

UDP-N-acetyl-alpha-D-glucosamine-binding positions include 15-17, N127, S184, I230, and Q275; that span reads TGG.

It belongs to the glycosyltransferase 28 family. MurG subfamily.

The protein resides in the cell inner membrane. It catalyses the reaction di-trans,octa-cis-undecaprenyl diphospho-N-acetyl-alpha-D-muramoyl-L-alanyl-D-glutamyl-meso-2,6-diaminopimeloyl-D-alanyl-D-alanine + UDP-N-acetyl-alpha-D-glucosamine = di-trans,octa-cis-undecaprenyl diphospho-[N-acetyl-alpha-D-glucosaminyl-(1-&gt;4)]-N-acetyl-alpha-D-muramoyl-L-alanyl-D-glutamyl-meso-2,6-diaminopimeloyl-D-alanyl-D-alanine + UDP + H(+). It participates in cell wall biogenesis; peptidoglycan biosynthesis. Its function is as follows. Cell wall formation. Catalyzes the transfer of a GlcNAc subunit on undecaprenyl-pyrophosphoryl-MurNAc-pentapeptide (lipid intermediate I) to form undecaprenyl-pyrophosphoryl-MurNAc-(pentapeptide)GlcNAc (lipid intermediate II). This Vesicomyosocius okutanii subsp. Calyptogena okutanii (strain HA) protein is UDP-N-acetylglucosamine--N-acetylmuramyl-(pentapeptide) pyrophosphoryl-undecaprenol N-acetylglucosamine transferase.